Consider the following 205-residue polypeptide: Peptidyl-tRNA hydrolase (205 aa).

Y18 is a binding site for tRNA. H23 functions as the Proton acceptor in the catalytic mechanism. Residues Y69, N71, and N117 each coordinate tRNA.

It belongs to the PTH family. Monomer.

The protein resides in the cytoplasm. It carries out the reaction an N-acyl-L-alpha-aminoacyl-tRNA + H2O = an N-acyl-L-amino acid + a tRNA + H(+). Hydrolyzes ribosome-free peptidyl-tRNAs (with 1 or more amino acids incorporated), which drop off the ribosome during protein synthesis, or as a result of ribosome stalling. In terms of biological role, catalyzes the release of premature peptidyl moieties from peptidyl-tRNA molecules trapped in stalled 50S ribosomal subunits, and thus maintains levels of free tRNAs and 50S ribosomes. The chain is Peptidyl-tRNA hydrolase from Synechococcus sp. (strain CC9605).